Here is a 168-residue protein sequence, read N- to C-terminus: Type-2 ice-structuring protein (168 aa).

Residues methionine 1–alanine 17 form the signal peptide. Residues aspartate 18–serine 34 constitute a propeptide that is removed on maturation. Cystine bridges form between cysteine 45–cysteine 56, cysteine 73–cysteine 163, cysteine 107–cysteine 138, cysteine 127–cysteine 149, and cysteine 139–cysteine 155. One can recognise a C-type lectin domain in the interval histidine 52–alanine 164.

It localises to the secreted. Functionally, has antifreeze activity to protect fish blood from freezing at subzero sea water temperatures. Binds to ice crystals and inhibits their growth. The thermal hysteresis (TH) activity, the ability to lower the blood freezing point, is approximately 0.45 degrees Celsius at 0.15 mM for this protein. In Brachyopsis segaliensis (Sea poacher), this protein is Type-2 ice-structuring protein.